We begin with the raw amino-acid sequence, 721 residues long: Penicillin-binding protein activator LpoA (721 aa).

The signal sequence occupies residues 1–26 (MVPLTFLRTKASRSLPIMLAALIFAG). A lipid anchor (N-palmitoyl cysteine) is attached at Cys27. The S-diacylglycerol cysteine moiety is linked to residue Cys27. The span at 316–330 (TSDLTSAQAPAQGTM) shows a compositional bias: polar residues. The tract at residues 316-393 (TSDLTSAQAP…PAAQPQAVAA (78 aa)) is disordered. Residues 331 to 393 (QNPVTAPTTP…PAAQPQAVAA (63 aa)) show a composition bias toward low complexity.

This sequence belongs to the LpoA family. In terms of assembly, interacts with PBP1a.

Its subcellular location is the cell outer membrane. Regulator of peptidoglycan synthesis that is essential for the function of penicillin-binding protein 1A (PBP1a). This chain is Penicillin-binding protein activator LpoA, found in Enterobacter sp. (strain 638).